A 213-amino-acid chain; its full sequence is Uridine kinase (213 aa).

Residue 15-22 coordinates ATP; sequence GASASGKS.

This sequence belongs to the uridine kinase family.

The protein resides in the cytoplasm. It catalyses the reaction uridine + ATP = UMP + ADP + H(+). The enzyme catalyses cytidine + ATP = CMP + ADP + H(+). The protein operates within pyrimidine metabolism; CTP biosynthesis via salvage pathway; CTP from cytidine: step 1/3. Its pathway is pyrimidine metabolism; UMP biosynthesis via salvage pathway; UMP from uridine: step 1/1. This Pectobacterium carotovorum subsp. carotovorum (strain PC1) protein is Uridine kinase.